Here is a 230-residue protein sequence, read N- to C-terminus: Orotidine 5'-phosphate decarboxylase (230 aa).

Residues D11, K34, D61–T70, T117, R179, Q188, G208, and R209 each bind substrate. The active-site Proton donor is K63.

The protein belongs to the OMP decarboxylase family. Type 1 subfamily. As to quaternary structure, homodimer.

It catalyses the reaction orotidine 5'-phosphate + H(+) = UMP + CO2. It functions in the pathway pyrimidine metabolism; UMP biosynthesis via de novo pathway; UMP from orotate: step 2/2. Its function is as follows. Catalyzes the decarboxylation of orotidine 5'-monophosphate (OMP) to uridine 5'-monophosphate (UMP). This chain is Orotidine 5'-phosphate decarboxylase, found in Streptococcus mutans serotype c (strain ATCC 700610 / UA159).